Consider the following 152-residue polypeptide: SsrA-binding protein (152 aa).

The protein belongs to the SmpB family.

It is found in the cytoplasm. Required for rescue of stalled ribosomes mediated by trans-translation. Binds to transfer-messenger RNA (tmRNA), required for stable association of tmRNA with ribosomes. tmRNA and SmpB together mimic tRNA shape, replacing the anticodon stem-loop with SmpB. tmRNA is encoded by the ssrA gene; the 2 termini fold to resemble tRNA(Ala) and it encodes a 'tag peptide', a short internal open reading frame. During trans-translation Ala-aminoacylated tmRNA acts like a tRNA, entering the A-site of stalled ribosomes, displacing the stalled mRNA. The ribosome then switches to translate the ORF on the tmRNA; the nascent peptide is terminated with the 'tag peptide' encoded by the tmRNA and targeted for degradation. The ribosome is freed to recommence translation, which seems to be the essential function of trans-translation. The protein is SsrA-binding protein of Rickettsia montanensis.